A 188-amino-acid chain; its full sequence is dCTP deaminase (188 aa).

109 to 114 contacts dCTP; it reads KSTYAR. Glu-135 acts as the Proton donor/acceptor in catalysis. DCTP contacts are provided by Gln-154, Tyr-168, and Gln-178.

Belongs to the dCTP deaminase family. In terms of assembly, homotrimer.

The catalysed reaction is dCTP + H2O + H(+) = dUTP + NH4(+). It participates in pyrimidine metabolism; dUMP biosynthesis; dUMP from dCTP (dUTP route): step 1/2. Its function is as follows. Catalyzes the deamination of dCTP to dUTP. This is dCTP deaminase from Helicobacter pylori (strain G27).